The primary structure comprises 64 residues: Probable spore germination protein GerPD (64 aa).

In terms of biological role, required for the formation of functionally normal spores. Could be involved in the establishment of normal spore coat structure and/or permeability, which allows the access of germinants to their receptor. The sequence is that of Probable spore germination protein GerPD (gerPD) from Bacillus cereus.